A 357-amino-acid polypeptide reads, in one-letter code: Homoserine kinase (357 aa).

Residue Lys133 forms a Glycyl lysine isopeptide (Lys-Gly) (interchain with G-Cter in ubiquitin) linkage.

Belongs to the GHMP kinase family. Homoserine kinase subfamily. As to quaternary structure, homodimer.

It catalyses the reaction L-homoserine + ATP = O-phospho-L-homoserine + ADP + H(+). The protein operates within amino-acid biosynthesis; L-threonine biosynthesis; L-threonine from L-aspartate: step 4/5. In terms of biological role, commits homoserine to the threonine biosynthesis pathway by catalyzing its O-phosphorylation. The chain is Homoserine kinase (THR1) from Saccharomyces cerevisiae (strain ATCC 204508 / S288c) (Baker's yeast).